The sequence spans 504 residues: MQSYVLEMKGITKEFPGVRALDNVTFSVRKGEIHALCGENGAGKSTLMKVLSGVYPYGSYDGKIYIEGKEVRFRNIKESQEAGIAIIYQELAVVEEMTVAENLFLGHELMRGKYIDWNRLYSEAQKWLQKIGLDIDPETKVRNLTVGKQQLIEIAKALSKNAKIIILDEPTAALTDSDVATLKNILCDLRSQGVTCIYISHRLNEVMELADTVTVLRDGQTISTDRIELLTEEQIIAKMVGRELNELYPYEPRNVGKEILKVDHYSVIDEQTGREVIHDVSFSLKAGEILGISGLMGSGRTELFTSLFGAYHGKKKGTVWIDGKQVDIRRPAEAIQYGMAYVSEDRKKYGLVLEMDIIKNSTLVALKKVTKWNVIDHALEVKQAEEITKRMKLKAPTLEAKVSQLSGGNQQKVVLSKWLLNSPKILILDEPTRGIDVGAKYEIYKIINELASQGVGIVLISSELPEVMGMSDRILVMSEGRITGEFQRHEATQEKIMTCATGGK.

ABC transporter domains are found at residues 6–243 and 260–504; these read LEMK…VGRE and LKVD…TGGK. Residue 38 to 45 coordinates ATP; the sequence is GENGAGKS.

This sequence belongs to the ABC transporter superfamily. Xylose importer (TC 3.A.1.2.4) family. As to quaternary structure, the complex is composed of two ATP-binding proteins (XylG), two transmembrane proteins (XylH) and a solute-binding protein (XylF).

Its subcellular location is the cell membrane. The catalysed reaction is D-xylose(out) + ATP + H2O = D-xylose(in) + ADP + phosphate + H(+). Functionally, part of the ABC transporter complex XylFGH involved in xylose import. Responsible for energy coupling to the transport system. This is Xylose import ATP-binding protein XylG from Geobacillus kaustophilus (strain HTA426).